A 276-amino-acid polypeptide reads, in one-letter code: Rho-related protein racO (276 aa).

11 to 18 is a GTP binding site; the sequence is GDGLIGKT. Residues 34-42 carry the Effector region motif; sequence YSSFDSEYL. GTP contacts are provided by residues 60–64 and 124–127; these read ENDGF and IKTD. The tract at residues 199-276 is disordered; it reads FKNNNNNNNY…NKTTNKCKIS (78 aa). The span at 200 to 270 shows a compositional bias: low complexity; the sequence is KNNNNNNNYN…SYKNHNNKTT (71 aa). Cysteine 273 carries the cysteine methyl ester modification. The S-geranylgeranyl cysteine moiety is linked to residue cysteine 273. Positions 274–276 are cleaved as a propeptide — removed in mature form; that stretch reads KIS.

The protein belongs to the small GTPase superfamily. Rho family.

The protein localises to the cell membrane. This chain is Rho-related protein racO (racO), found in Dictyostelium discoideum (Social amoeba).